Reading from the N-terminus, the 251-residue chain is MCTSKLEEITGEWPPPALQAASTTSSSEPCRRLSPPSSKRPAGRTKFHETRHPVFRGVRRRGRAGRWVCEVRVPGRRGCRLWLGTFDAADAAARAHDAAMLALRGRAAACLNFADSAWLLAVPPPATLRCAADVQRAVARALEDFEQRESSSSVFPLAIDVVAEDAMSATSEPSAASDDDAVTSSSSTTDADEEASPFELDVVSDMGWSLYYASLAEGLLMEPPASGASSDDDDDAIVDSSDIADVSLWSY.

The tract at residues 1–50 (MCTSKLEEITGEWPPPALQAASTTSSSEPCRRLSPPSSKRPAGRTKFHET) is disordered. Positions 54–114 (VFRGVRRRGR…GRAAACLNFA (61 aa)) form a DNA-binding region, AP2/ERF. The tract at residues 169 to 198 (ATSEPSAASDDDAVTSSSSTTDADEEASPF) is disordered.

Belongs to the AP2/ERF transcription factor family. ERF subfamily.

It is found in the nucleus. Its function is as follows. Transcriptional activator that binds specifically to the DNA sequence 5'-[AG]CCGAC-3'. Binding to the C-repeat/DRE element mediates high salinity- and dehydration-inducible transcription. The chain is Dehydration-responsive element-binding protein 1I (DREB1I) from Oryza sativa subsp. japonica (Rice).